The sequence spans 117 residues: Large ribosomal subunit protein uL18 (117 aa).

Belongs to the universal ribosomal protein uL18 family. As to quaternary structure, part of the 50S ribosomal subunit; part of the 5S rRNA/L5/L18/L25 subcomplex. Contacts the 5S and 23S rRNAs.

Its function is as follows. This is one of the proteins that bind and probably mediate the attachment of the 5S RNA into the large ribosomal subunit, where it forms part of the central protuberance. This chain is Large ribosomal subunit protein uL18, found in Aliivibrio salmonicida (strain LFI1238) (Vibrio salmonicida (strain LFI1238)).